A 366-amino-acid polypeptide reads, in one-letter code: Holliday junction branch migration complex subunit RuvB (366 aa).

Residues 1 to 50 (MAIISSKKQPPEPNGEPKQRRESAKAPSTENILKPEAAIDEQEQQEEGIR) are disordered. The tract at residues 13-210 (PNGEPKQRRE…FGLIQKLRFY (198 aa)) is large ATPase domain (RuvB-L). Residues 15 to 24 (GEPKQRRESA) show a composition bias toward basic and acidic residues. Residues isoleucine 49, arginine 50, glycine 91, lysine 94, threonine 95, threonine 96, 157–159 (EDY), arginine 200, tyrosine 210, and arginine 247 each bind ATP. Threonine 95 is a Mg(2+) binding site. Residues 211 to 281 (EVDELTQIVL…IASEALQLFQ (71 aa)) are small ATPAse domain (RuvB-S). The head domain (RuvB-H) stretch occupies residues 284 to 366 (PCGLDWTDRQ…TPPNEQLSLL (83 aa)). The DNA site is built by arginine 339 and arginine 344.

The protein belongs to the RuvB family. As to quaternary structure, homohexamer. Forms an RuvA(8)-RuvB(12)-Holliday junction (HJ) complex. HJ DNA is sandwiched between 2 RuvA tetramers; dsDNA enters through RuvA and exits via RuvB. An RuvB hexamer assembles on each DNA strand where it exits the tetramer. Each RuvB hexamer is contacted by two RuvA subunits (via domain III) on 2 adjacent RuvB subunits; this complex drives branch migration. In the full resolvosome a probable DNA-RuvA(4)-RuvB(12)-RuvC(2) complex forms which resolves the HJ.

It is found in the cytoplasm. The catalysed reaction is ATP + H2O = ADP + phosphate + H(+). The RuvA-RuvB-RuvC complex processes Holliday junction (HJ) DNA during genetic recombination and DNA repair, while the RuvA-RuvB complex plays an important role in the rescue of blocked DNA replication forks via replication fork reversal (RFR). RuvA specifically binds to HJ cruciform DNA, conferring on it an open structure. The RuvB hexamer acts as an ATP-dependent pump, pulling dsDNA into and through the RuvAB complex. RuvB forms 2 homohexamers on either side of HJ DNA bound by 1 or 2 RuvA tetramers; 4 subunits per hexamer contact DNA at a time. Coordinated motions by a converter formed by DNA-disengaged RuvB subunits stimulates ATP hydrolysis and nucleotide exchange. Immobilization of the converter enables RuvB to convert the ATP-contained energy into a lever motion, pulling 2 nucleotides of DNA out of the RuvA tetramer per ATP hydrolyzed, thus driving DNA branch migration. The RuvB motors rotate together with the DNA substrate, which together with the progressing nucleotide cycle form the mechanistic basis for DNA recombination by continuous HJ branch migration. Branch migration allows RuvC to scan DNA until it finds its consensus sequence, where it cleaves and resolves cruciform DNA. In Nostoc punctiforme (strain ATCC 29133 / PCC 73102), this protein is Holliday junction branch migration complex subunit RuvB.